The chain runs to 831 residues: Prolactin receptor (831 aa).

An N-terminal signal peptide occupies residues Met-1–Ala-23. At Gly-24–Asp-438 the chain is on the extracellular side. Fibronectin type-III domains lie at Lys-30 to Gly-128, Ser-129 to Gly-227, Pro-230 to Asp-331, and Pro-332 to Asp-433. An intrachain disulfide couples Cys-36 to Cys-46. Asn-59 carries N-linked (GlcNAc...) asparagine glycosylation. Cys-75 and Cys-86 form a disulfide bridge. Asn-91, Asn-100, Asn-112, Asn-132, Asn-262, Asn-303, Asn-315, and Asn-335 each carry an N-linked (GlcNAc...) asparagine glycan. Zn(2+) is bound by residues Asp-414 and His-416. The WSXWS motif motif lies at Trp-419–Ser-423. A helical transmembrane segment spans residues Met-439–Thr-459. At Met-460 to Lys-831 the chain is on the cytoplasmic side. Positions Met-471–Lys-479 match the Box 1 motif motif. 3 disordered regions span residues Gln-527 to Leu-563, Arg-774 to Gln-796, and Pro-808 to Lys-831. The span at Glu-787–Gln-796 shows a compositional bias: polar residues.

This sequence belongs to the type I cytokine receptor family. Type 1 subfamily.

The protein resides in the membrane. In terms of biological role, this is a receptor for the anterior pituitary hormone prolactin. This is Prolactin receptor (PRLR) from Gallus gallus (Chicken).